Reading from the N-terminus, the 758-residue chain is Vitamin K-dependent gamma-carboxylase (758 aa).

The disordered stretch occupies residues 1–29 (MAVHRGSARAAPASDKVQKNKPAQTSGLE). Position 2 is an N-acetylalanine (Ala2). Residues 2 to 60 (AVHRGSARAAPASDKVQKNKPAQTSGLEQGSRMARIFGFEWADLSSWQSVVTLLNRPTD) lie on the Cytoplasmic side of the membrane. A helical transmembrane segment spans residues 61–81 (PANLAVFRFLFAFLMLLDIPQ). The Lumenal portion of the chain corresponds to 82–113 (ERGLSSLDRKYLDGLDVCRFPLLDALRPLPLD). Cysteines 99 and 450 form a disulfide. A helical transmembrane segment spans residues 114-134 (WMYLVYTIMFLGALGMMLGLW). The Cytoplasmic portion of the chain corresponds to 135–136 (YR). A helical membrane pass occupies residues 137–157 (LSCMLFLLPYWYVFLLDKTSW). Residues 158–292 (NNHSYLYGLL…VSYFHCMNSQ (135 aa)) lie on the Lumenal side of the membrane. Residues 293 to 313 (LFSIGMFPYVMLASSPLFCSA) traverse the membrane as a helical segment. At 314–361 (EWPRKLVARCPKRLQELLPAKAAPRPSASCVYKRARAKAGQKPGLRHH) the chain is on the cytoplasmic side. The chain crosses the membrane as a helical span at residues 362-382 (LGTVFTLLYLLEQLFLPYSHF). Topologically, residues 383–758 (LTQGYNNWTN…PDSEHVHSEL (376 aa)) are lumenal. Positions 727–758 (PFEPVDESSASNTDSSDPHPSEPDSEHVHSEL) are disordered. Positions 742–758 (SDPHPSEPDSEHVHSEL) are enriched in basic and acidic residues.

It belongs to the vitamin K-dependent gamma-carboxylase family. As to quaternary structure, monomer. Interacts with CALU.

Its subcellular location is the endoplasmic reticulum membrane. The enzyme catalyses 4-carboxy-L-glutamyl-[protein] + 2,3-epoxyphylloquinone + H2O + H(+) = phylloquinol + L-glutamyl-[protein] + CO2 + O2. Its function is as follows. Mediates the vitamin K-dependent carboxylation of glutamate residues to calcium-binding gamma-carboxyglutamate (Gla) residues with the concomitant conversion of the reduced hydroquinone form of vitamin K to vitamin K epoxide. Catalyzes gamma-carboxylation of various proteins, such as blood coagulation factors (F2, F7, F9 and F10), osteocalcin (BGLAP) or matrix Gla protein (MGP). This chain is Vitamin K-dependent gamma-carboxylase (Ggcx), found in Rattus norvegicus (Rat).